The following is a 612-amino-acid chain: Dihydroxy-acid dehydratase (612 aa).

Asp-81 is a binding site for Mg(2+). Residue Cys-122 coordinates [2Fe-2S] cluster. 2 residues coordinate Mg(2+): Asp-123 and Lys-124. The residue at position 124 (Lys-124) is an N6-carboxylysine. Cys-195 serves as a coordination point for [2Fe-2S] cluster. Glu-491 serves as a coordination point for Mg(2+). The Proton acceptor role is filled by Ser-517.

Belongs to the IlvD/Edd family. As to quaternary structure, homodimer. The cofactor is [2Fe-2S] cluster. Mg(2+) is required as a cofactor.

The enzyme catalyses (2R)-2,3-dihydroxy-3-methylbutanoate = 3-methyl-2-oxobutanoate + H2O. The catalysed reaction is (2R,3R)-2,3-dihydroxy-3-methylpentanoate = (S)-3-methyl-2-oxopentanoate + H2O. Its pathway is amino-acid biosynthesis; L-isoleucine biosynthesis; L-isoleucine from 2-oxobutanoate: step 3/4. It participates in amino-acid biosynthesis; L-valine biosynthesis; L-valine from pyruvate: step 3/4. In terms of biological role, functions in the biosynthesis of branched-chain amino acids. Catalyzes the dehydration of (2R,3R)-2,3-dihydroxy-3-methylpentanoate (2,3-dihydroxy-3-methylvalerate) into 2-oxo-3-methylpentanoate (2-oxo-3-methylvalerate) and of (2R)-2,3-dihydroxy-3-methylbutanoate (2,3-dihydroxyisovalerate) into 2-oxo-3-methylbutanoate (2-oxoisovalerate), the penultimate precursor to L-isoleucine and L-valine, respectively. The protein is Dihydroxy-acid dehydratase of Rhizobium meliloti (strain 1021) (Ensifer meliloti).